Here is a 320-residue protein sequence, read N- to C-terminus: Malate dehydrogenase (320 aa).

NAD(+) is bound by residues 10 to 15 (GAGNIG) and aspartate 34. Substrate-binding residues include arginine 83 and arginine 89. Residues asparagine 96 and 119-121 (ITN) each bind NAD(+). Substrate is bound by residues asparagine 121 and arginine 152. Histidine 176 functions as the Proton acceptor in the catalytic mechanism.

Belongs to the LDH/MDH superfamily. MDH type 3 family.

It carries out the reaction (S)-malate + NAD(+) = oxaloacetate + NADH + H(+). Catalyzes the reversible oxidation of malate to oxaloacetate. This is Malate dehydrogenase from Rhizorhabdus wittichii (strain DSM 6014 / CCUG 31198 / JCM 15750 / NBRC 105917 / EY 4224 / RW1) (Sphingomonas wittichii).